A 310-amino-acid chain; its full sequence is Tetrahydromethanopterin S-methyltransferase subunit H (310 aa).

The protein belongs to the MtrH family. In terms of assembly, the complex is composed of 8 subunits; MtrA, MtrB, MtrC, MtrD, MtrE, MtrF, MtrG and MtrH.

It catalyses the reaction 5-methyl-5,6,7,8-tetrahydromethanopterin + coenzyme M + 2 Na(+)(in) = 5,6,7,8-tetrahydromethanopterin + methyl-coenzyme M + 2 Na(+)(out). The protein operates within one-carbon metabolism; methanogenesis from CO(2); methyl-coenzyme M from 5,10-methylene-5,6,7,8-tetrahydromethanopterin: step 2/2. Functionally, part of a complex that catalyzes the formation of methyl-coenzyme M and tetrahydromethanopterin from coenzyme M and methyl-tetrahydromethanopterin. This is an energy-conserving, sodium-ion translocating step. MtrH catalyzes the transfer of the methyl group from methyl-tetrahydromethanopterin to the corrinoid prosthetic group of MtrA. The sequence is that of Tetrahydromethanopterin S-methyltransferase subunit H from Methanothermobacter thermautotrophicus (strain ATCC 29096 / DSM 1053 / JCM 10044 / NBRC 100330 / Delta H) (Methanobacterium thermoautotrophicum).